A 195-amino-acid chain; its full sequence is Nascent polypeptide-associated complex subunit alpha (195 aa).

Disordered regions lie at residues Met1–Glu59 and Thr132–Ser153. Over residues Thr7 to Gln16 the composition is skewed to basic and acidic residues. A compositionally biased stretch (acidic residues) spans Val19–Thr33. A compositionally biased stretch (basic and acidic residues) spans Asp47 to Glu59. One can recognise an NAC-A/B domain in the interval Ser56–Ala121. Residues Glu142–Ser153 show a composition bias toward acidic residues.

Belongs to the NAC-alpha family. May be part of the nascent polypeptide-associated complex (NAC), which is a heterodimer of icd-2 and icd-1 (via NAC-A/B domains).

It localises to the cytoplasm. Its function is as follows. May prevent inappropriate targeting of non-secretory polypeptides to the endoplasmic reticulum (ER). Plays a role in the response to heat stress. The polypeptide is Nascent polypeptide-associated complex subunit alpha (Caenorhabditis elegans).